Reading from the N-terminus, the 197-residue chain is NADH-quinone oxidoreductase subunit C (197 aa).

The protein belongs to the complex I 30 kDa subunit family. NDH-1 is composed of 14 different subunits. Subunits NuoB, C, D, E, F, and G constitute the peripheral sector of the complex.

It localises to the cell inner membrane. It catalyses the reaction a quinone + NADH + 5 H(+)(in) = a quinol + NAD(+) + 4 H(+)(out). Its function is as follows. NDH-1 shuttles electrons from NADH, via FMN and iron-sulfur (Fe-S) centers, to quinones in the respiratory chain. The immediate electron acceptor for the enzyme in this species is believed to be ubiquinone. Couples the redox reaction to proton translocation (for every two electrons transferred, four hydrogen ions are translocated across the cytoplasmic membrane), and thus conserves the redox energy in a proton gradient. This is NADH-quinone oxidoreductase subunit C from Neisseria meningitidis serogroup B (strain ATCC BAA-335 / MC58).